A 304-amino-acid polypeptide reads, in one-letter code: Acetyl-coenzyme A carboxylase carboxyl transferase subunit beta (304 aa).

Residues 25–294 form the CoA carboxyltransferase N-terminal domain; sequence VWTKCDSCGQ…PSVVESKADT (270 aa). Positions 29, 32, 48, and 51 each coordinate Zn(2+). The C4-type zinc finger occupies 29-51; the sequence is CDSCGQVLYRAELERNLEVCPKC.

It belongs to the AccD/PCCB family. As to quaternary structure, acetyl-CoA carboxylase is a heterohexamer composed of biotin carboxyl carrier protein (AccB), biotin carboxylase (AccC) and two subunits each of ACCase subunit alpha (AccA) and ACCase subunit beta (AccD). Zn(2+) serves as cofactor.

The protein resides in the cytoplasm. It catalyses the reaction N(6)-carboxybiotinyl-L-lysyl-[protein] + acetyl-CoA = N(6)-biotinyl-L-lysyl-[protein] + malonyl-CoA. The protein operates within lipid metabolism; malonyl-CoA biosynthesis; malonyl-CoA from acetyl-CoA: step 1/1. Component of the acetyl coenzyme A carboxylase (ACC) complex. Biotin carboxylase (BC) catalyzes the carboxylation of biotin on its carrier protein (BCCP) and then the CO(2) group is transferred by the transcarboxylase to acetyl-CoA to form malonyl-CoA. The polypeptide is Acetyl-coenzyme A carboxylase carboxyl transferase subunit beta (Yersinia pestis (strain Pestoides F)).